The primary structure comprises 259 residues: Zinc import ATP-binding protein ZnuC (259 aa).

The ABC transporter domain occupies 6–223; the sequence is VTVQSVSVTL…PAYHELFGPG (218 aa). 38-45 serves as a coordination point for ATP; it reads GPNGAGKS. Residues 230-259 form a disordered region; that stretch reads ALYTHDHDHDHDLHGNATHSHDHNGPCNHD. Residues 233-259 are compositionally biased toward basic and acidic residues; sequence THDHDHDHDLHGNATHSHDHNGPCNHD.

It belongs to the ABC transporter superfamily. Zinc importer (TC 3.A.1.15.5) family. The complex is composed of two ATP-binding proteins (ZnuC), two transmembrane proteins (ZnuB) and a solute-binding protein (ZnuA).

Its subcellular location is the cell inner membrane. The enzyme catalyses Zn(2+)(out) + ATP(in) + H2O(in) = Zn(2+)(in) + ADP(in) + phosphate(in) + H(+)(in). Functionally, part of the ABC transporter complex ZnuABC involved in zinc import. Responsible for energy coupling to the transport system. This chain is Zinc import ATP-binding protein ZnuC, found in Alcanivorax borkumensis (strain ATCC 700651 / DSM 11573 / NCIMB 13689 / SK2).